The primary structure comprises 199 residues: NAD(P)H dehydrogenase (quinone) (199 aa).

The Flavodoxin-like domain occupies 4–190 (VLVLYYSAYG…AGARYQGRVI (187 aa)). FMN contacts are provided by residues 10-15 (SAYGHI) and 78-80 (TRF). An NAD(+)-binding site is contributed by tyrosine 12. Residue tryptophan 98 coordinates substrate. FMN contacts are provided by residues 113 to 119 (STATQHG) and histidine 134.

The protein belongs to the WrbA family. Requires FMN as cofactor.

It carries out the reaction a quinone + NADH + H(+) = a quinol + NAD(+). The enzyme catalyses a quinone + NADPH + H(+) = a quinol + NADP(+). This chain is NAD(P)H dehydrogenase (quinone), found in Bradyrhizobium sp. (strain ORS 278).